Here is a 327-residue protein sequence, read N- to C-terminus: tRNA(Ile)-lysidine synthase (327 aa).

32 to 37 (SGGQDS) serves as a coordination point for ATP.

Belongs to the tRNA(Ile)-lysidine synthase family.

Its subcellular location is the cytoplasm. It catalyses the reaction cytidine(34) in tRNA(Ile2) + L-lysine + ATP = lysidine(34) in tRNA(Ile2) + AMP + diphosphate + H(+). Functionally, ligates lysine onto the cytidine present at position 34 of the AUA codon-specific tRNA(Ile) that contains the anticodon CAU, in an ATP-dependent manner. Cytidine is converted to lysidine, thus changing the amino acid specificity of the tRNA from methionine to isoleucine. This is tRNA(Ile)-lysidine synthase from Synechococcus sp. (strain JA-2-3B'a(2-13)) (Cyanobacteria bacterium Yellowstone B-Prime).